Consider the following 424-residue polypeptide: Transcription regulator spe-44 (424 aa).

Residues 65 to 150 form the SAND domain; the sequence is PLQITIPEGD…RTHMEAMTID (86 aa). Disordered regions lie at residues 178–228 and 371–394; these read ARKS…KPRQ and EHSVKYQPRTSSSSQESLHTAREF. The span at 192 to 210 shows a compositional bias: basic and acidic residues; the sequence is YEIENEMAGKEADNDDNRK. Polar residues predominate over residues 378–388; the sequence is PRTSSSSQESL.

The protein resides in the chromosome. The protein localises to the nucleus. Its function is as follows. Transcription factor which controls spermatogenesis and sperm cell fate by regulation of sperm gene expression. This Caenorhabditis elegans protein is Transcription regulator spe-44.